Consider the following 216-residue polypeptide: Imidazole glycerol phosphate synthase subunit HisH (216 aa).

In terms of domain architecture, Glutamine amidotransferase type-1 spans 2-216 (RVAIIDYGSG…FIANFLKWKP (215 aa)). The active-site Nucleophile is the cysteine 88. Active-site residues include histidine 196 and glutamate 198.

In terms of assembly, heterodimer of HisH and HisF.

It is found in the cytoplasm. The catalysed reaction is 5-[(5-phospho-1-deoxy-D-ribulos-1-ylimino)methylamino]-1-(5-phospho-beta-D-ribosyl)imidazole-4-carboxamide + L-glutamine = D-erythro-1-(imidazol-4-yl)glycerol 3-phosphate + 5-amino-1-(5-phospho-beta-D-ribosyl)imidazole-4-carboxamide + L-glutamate + H(+). The enzyme catalyses L-glutamine + H2O = L-glutamate + NH4(+). The protein operates within amino-acid biosynthesis; L-histidine biosynthesis; L-histidine from 5-phospho-alpha-D-ribose 1-diphosphate: step 5/9. Functionally, IGPS catalyzes the conversion of PRFAR and glutamine to IGP, AICAR and glutamate. The HisH subunit catalyzes the hydrolysis of glutamine to glutamate and ammonia as part of the synthesis of IGP and AICAR. The resulting ammonia molecule is channeled to the active site of HisF. In Brucella melitensis biotype 1 (strain ATCC 23456 / CCUG 17765 / NCTC 10094 / 16M), this protein is Imidazole glycerol phosphate synthase subunit HisH.